The following is an 843-amino-acid chain: Alpha-L-fucosidase 2 (843 aa).

Residues 1 to 27 form the signal peptide; that stretch reads MAEKSSFFVHFSCLLLLLTIIITCGEG. 4 N-linked (GlcNAc...) asparagine glycosylation sites follow: Asn62, Asn253, Asn365, and Asn605.

It belongs to the glycosyl hydrolase 95 family. As to expression, ubiquitous. Highest expression in vascular tissues, leaf trichomes, root elongation zone and emerging lateral roots.

It localises to the secreted. The protein localises to the extracellular space. Its subcellular location is the apoplast. It catalyses the reaction an alpha-L-fucoside + H2O = L-fucose + an alcohol. Functionally, hydrolyzes alpha-1,2-linked fucose. Also active on fucosylated xyloglucan oligosaccharides. No activity with 3-fucosyllactose, p-nitrophenyl-alpha-I-fucopyranoside, lacto-N-fucopentaose II, lacto-N-fucopentaose III or alpha 1,6-fucosylated chitopentaose. Involved in apoplastic xyloglucan metabolism. The polypeptide is Alpha-L-fucosidase 2 (FUC95A) (Arabidopsis thaliana (Mouse-ear cress)).